The chain runs to 288 residues: Probable pectinesterase 56 (288 aa).

Positions 1–27 (MAMTSTMQLLVLSFLVIASLFLGATVA) are cleaved as a signal peptide. N-linked (GlcNAc...) asparagine glycosylation is found at N55 and N95. Residues T120 and Q150 each coordinate substrate. D173 functions as the Proton donor in the catalytic mechanism. D194 acts as the Nucleophile in catalysis. The N-linked (GlcNAc...) asparagine glycan is linked to N242. Residues R262 and W264 each coordinate substrate.

It belongs to the pectinesterase family.

Its subcellular location is the secreted. It localises to the cell wall. The catalysed reaction is [(1-&gt;4)-alpha-D-galacturonosyl methyl ester](n) + n H2O = [(1-&gt;4)-alpha-D-galacturonosyl](n) + n methanol + n H(+). It functions in the pathway glycan metabolism; pectin degradation; 2-dehydro-3-deoxy-D-gluconate from pectin: step 1/5. In terms of biological role, acts in the modification of cell walls via demethylesterification of cell wall pectin. The chain is Probable pectinesterase 56 (PME56) from Arabidopsis thaliana (Mouse-ear cress).